We begin with the raw amino-acid sequence, 304 residues long: Oxygen-dependent coproporphyrinogen-III oxidase (304 aa).

Serine 94 contacts substrate. A divalent metal cation contacts are provided by histidine 98 and histidine 108. Catalysis depends on histidine 108, which acts as the Proton donor. Position 110–112 (110–112 (NVR)) interacts with substrate. 2 residues coordinate a divalent metal cation: histidine 147 and histidine 177. The interval 242-277 (YVEFNLVYDRGTLFGLQTGGRTESILMSMPPLVRWE) is important for dimerization. Residue 260–262 (GGR) coordinates substrate.

This sequence belongs to the aerobic coproporphyrinogen-III oxidase family. As to quaternary structure, homodimer. A divalent metal cation serves as cofactor.

The protein localises to the cytoplasm. The enzyme catalyses coproporphyrinogen III + O2 + 2 H(+) = protoporphyrinogen IX + 2 CO2 + 2 H2O. Its pathway is porphyrin-containing compound metabolism; protoporphyrin-IX biosynthesis; protoporphyrinogen-IX from coproporphyrinogen-III (O2 route): step 1/1. In terms of biological role, involved in the heme biosynthesis. Catalyzes the aerobic oxidative decarboxylation of propionate groups of rings A and B of coproporphyrinogen-III to yield the vinyl groups in protoporphyrinogen-IX. The polypeptide is Oxygen-dependent coproporphyrinogen-III oxidase (Shewanella pealeana (strain ATCC 700345 / ANG-SQ1)).